A 301-amino-acid chain; its full sequence is Probable alpha-L-glutamate ligase (301 aa).

The ATP-grasp domain occupies 104–287 (LQLLARKGVG…VAGMIINWTE (184 aa)). Residues Lys141, 178-179 (EF), Asp187, and 211-213 (RSN) contribute to the ATP site. Mg(2+)-binding residues include Asp248, Glu260, and Asn262. Asp248, Glu260, and Asn262 together coordinate Mn(2+).

This sequence belongs to the RimK family. The cofactor is Mg(2+). Requires Mn(2+) as cofactor.

The chain is Probable alpha-L-glutamate ligase from Marinobacter nauticus (strain ATCC 700491 / DSM 11845 / VT8) (Marinobacter aquaeolei).